The sequence spans 180 residues: Cytochrome b6-f complex iron-sulfur subunit (180 aa).

The chain crosses the membrane as a helical span at residues 21–43 (LLTFGTITGTALGALYPVVKYFI). In terms of domain architecture, Rieske spans 66 to 162 (VSEYLAKHLP…ATVTEDDKLV (97 aa)). [2Fe-2S] cluster contacts are provided by C108, H110, C126, and H129. A disulfide bond links C113 and C128.

The protein belongs to the Rieske iron-sulfur protein family. In terms of assembly, the 4 large subunits of the cytochrome b6-f complex are cytochrome b6, subunit IV (17 kDa polypeptide, PetD), cytochrome f and the Rieske protein, while the 4 small subunits are PetG, PetL, PetM and PetN. The complex functions as a dimer. The cofactor is [2Fe-2S] cluster.

It is found in the cellular thylakoid membrane. It carries out the reaction 2 oxidized [plastocyanin] + a plastoquinol + 2 H(+)(in) = 2 reduced [plastocyanin] + a plastoquinone + 4 H(+)(out). In terms of biological role, component of the cytochrome b6-f complex, which mediates electron transfer between photosystem II (PSII) and photosystem I (PSI), cyclic electron flow around PSI, and state transitions. In Thermosynechococcus vestitus (strain NIES-2133 / IAM M-273 / BP-1), this protein is Cytochrome b6-f complex iron-sulfur subunit.